We begin with the raw amino-acid sequence, 428 residues long: Enolase 1 (428 aa).

Positions 38–58 (EVPSGASTGENEAVELRDGGS) are disordered. Glutamine 163 provides a ligand contact to (2R)-2-phosphoglycerate. Residue glutamate 205 is the Proton donor of the active site. 3 residues coordinate Mg(2+): aspartate 242, glutamate 286, and aspartate 313. (2R)-2-phosphoglycerate-binding residues include lysine 338, arginine 367, serine 368, and lysine 389. Lysine 338 serves as the catalytic Proton acceptor.

Belongs to the enolase family. Requires Mg(2+) as cofactor.

It is found in the cytoplasm. It localises to the secreted. Its subcellular location is the cell surface. It catalyses the reaction (2R)-2-phosphoglycerate = phosphoenolpyruvate + H2O. Its pathway is carbohydrate degradation; glycolysis; pyruvate from D-glyceraldehyde 3-phosphate: step 4/5. In terms of biological role, catalyzes the reversible conversion of 2-phosphoglycerate (2-PG) into phosphoenolpyruvate (PEP). It is essential for the degradation of carbohydrates via glycolysis. This is Enolase 1 from Lactobacillus gasseri (strain ATCC 33323 / DSM 20243 / BCRC 14619 / CIP 102991 / JCM 1131 / KCTC 3163 / NCIMB 11718 / NCTC 13722 / AM63).